Consider the following 30-residue polypeptide: Small toxic protein BsrE (30 aa).

Residues 4–24 form a helical membrane-spanning segment; that stretch reads FQALMLMLAIGSFIIALLTYI.

The protein localises to the cell membrane. Its function is as follows. Toxic component of a type I toxin-antitoxin (TA) system; overexpression in the absence of cognate antisense antitoxin SR5 RNA leads to cell lysis. Base pairing occurs between the 3' UTRs of bsrE mRNA and SR5 RNA which leads to bsrE mRNA degradation initiated by RNase III (rnc) and RNase J1 (rnjA). Genetic evidence suggests an unidentified RNA-binding protein may exist that promotes TA RNA interaction. The protein is Small toxic protein BsrE of Bacillus subtilis (strain 168).